The sequence spans 454 residues: Gastrin/cholecystokinin type B receptor (454 aa).

The Extracellular portion of the chain corresponds to 1–57 (MELLKPNRSVLGSGPGPGASLCRSGGPLLNGSGTGNLSCEPPRIRGAGTRELELAIR). Residues N7, N30, and N36 are each glycosylated (N-linked (GlcNAc...) asparagine). The chain crosses the membrane as a helical span at residues 58–79 (VTLYAVIFLMSVGGNVLIIVVL). At 80–87 (GLSRRLRT) the chain is on the cytoplasmic side. The helical transmembrane segment at 88 to 109 (VTNAFLLSLAVSDLLLAVACMP) threads the bilayer. Topologically, residues 110–131 (FTLLPNLMGTFIFGTVVCKAVS) are extracellular. A disulfide bond links C127 and C205. The helical transmembrane segment at 132-150 (YFMGVSVSVSTLSLVAIAL) threads the bilayer. Topologically, residues 151–170 (ERYSAICRPLQARVWQTRSH) are cytoplasmic. Residues 171 to 189 (AARVIVATWMLSGLLMVPY) form a helical membrane-spanning segment. Residues 190–219 (PVYTAVQPAGPRVLQCMHRWPSARVRQTWS) are Extracellular-facing. A helical membrane pass occupies residues 220–242 (VLLLLLLFFVPGVVMAVAYGLIS). Residues 243–340 (RELYLGLRFD…KLLAKKRVVR (98 aa)) are Cytoplasmic-facing. The disordered stretch occupies residues 257-284 (SESQSRVGSQGGLPGGTGQGPAQANGRC). A compositionally biased stretch (gly residues) spans 265–275 (SQGGLPGGTGQ). Residues 341–362 (MLLVIVVLFFLCWLPVYSANTW) form a helical membrane-spanning segment. At 363 to 380 (RAFDGPGAHRALSGAPIS) the chain is on the extracellular side. Residues 381-401 (FIHLLTYASACVNPLVYCFMH) form a helical membrane-spanning segment. The Cytoplasmic segment spans residues 402–454 (RRFRQACLDTCTRCCPRPPRARPRPLPDEDPPTPSIASLSRLSYTTISTLGPG). C415 carries the S-palmitoyl cysteine lipid modification. A disordered region spans residues 422–441 (ARPRPLPDEDPPTPSIASLS).

Belongs to the G-protein coupled receptor 1 family.

Its subcellular location is the cell membrane. Its function is as follows. Receptor for gastrin and cholecystokinin. The CCK-B receptors occur throughout the central nervous system where they modulate anxiety, analgesia, arousal, and neuroleptic activity. This receptor mediates its action by association with G proteins that activate a phosphatidylinositol-calcium second messenger system. This is Gastrin/cholecystokinin type B receptor (CCKBR) from Bos taurus (Bovine).